A 287-amino-acid polypeptide reads, in one-letter code: Large ribosomal subunit protein uL2 (287 aa).

Residues 221-287 (RGSVMNPCDH…SKRSRGGRDS (67 aa)) form a disordered region. Positions 258–287 (KTRKRNKPSNRFVLRKRRRVSKRSRGGRDS) are enriched in basic residues.

The protein belongs to the universal ribosomal protein uL2 family. Part of the 50S ribosomal subunit. Forms a bridge to the 30S subunit in the 70S ribosome.

In terms of biological role, one of the primary rRNA binding proteins. Required for association of the 30S and 50S subunits to form the 70S ribosome, for tRNA binding and peptide bond formation. It has been suggested to have peptidyltransferase activity; this is somewhat controversial. Makes several contacts with the 16S rRNA in the 70S ribosome. The polypeptide is Large ribosomal subunit protein uL2 (Prochlorococcus marinus (strain MIT 9211)).